A 912-amino-acid chain; its full sequence is Microtubule-associated protein 10 (912 aa).

Disordered regions lie at residues 31-50 (VAEE…RPSR), 209-239 (KSVE…ADKP), 254-296 (GRAF…QEGT), 335-366 (ASEE…SATG), 443-469 (SPES…NEKS), and 730-859 (RACD…VSSY). The segment covering 211–229 (VEVSPQTWQENQQLQQPDS) has biased composition (polar residues). The segment covering 254–263 (GRAFHSKADS) has biased composition (basic and acidic residues). Over residues 266 to 295 (TDSMENGKTNSDMCSKGSSERSVSPPNQEG) the composition is skewed to polar residues. A compositionally biased stretch (low complexity) spans 347 to 362 (ENVNPPTHTNPPEHTN). Residues 452-468 (CKSESKKDKLSVGENEK) show a composition bias toward basic and acidic residues. Positions 735–768 (SPGTENPKNSQHTSTSSETRLSIRKNSSAKSSIL) are enriched in polar residues. A compositionally biased stretch (low complexity) spans 796–807 (EASSSDFSSSQW). Polar residues predominate over residues 841-859 (GCKSSEKSQSPRTSQVSSY).

As to quaternary structure, interacts (via middle region) with microtubules.

The protein localises to the cytoplasm. Its subcellular location is the cytoskeleton. The protein resides in the spindle pole. It is found in the microtubule organizing center. It localises to the centrosome. The protein localises to the midbody. Microtubule-associated protein (MAP) that plays a role in the regulation of cell division; promotes microtubule stability and participates in the organization of the spindle midzone and normal progress of cytokinesis. This Bos taurus (Bovine) protein is Microtubule-associated protein 10 (MAP10).